The following is a 178-amino-acid chain: RNA pyrophosphohydrolase (178 aa).

Residues 18-171 (PYRPCVGLMV…KRKVYEQVVA (154 aa)) enclose the Nudix hydrolase domain. Residues 59 to 80 (GGIDKGEDPAQAALRELYEETG) carry the Nudix box motif.

This sequence belongs to the Nudix hydrolase family. RppH subfamily. A divalent metal cation serves as cofactor.

Functionally, accelerates the degradation of transcripts by removing pyrophosphate from the 5'-end of triphosphorylated RNA, leading to a more labile monophosphorylated state that can stimulate subsequent ribonuclease cleavage. This chain is RNA pyrophosphohydrolase, found in Brucella melitensis biotype 2 (strain ATCC 23457).